A 215-amino-acid chain; its full sequence is Triosephosphate isomerase (215 aa).

The Electrophile role is filled by H82. Catalysis depends on E153, which acts as the Proton acceptor.

The protein belongs to the triosephosphate isomerase family. In terms of assembly, homodimer.

It catalyses the reaction D-glyceraldehyde 3-phosphate = dihydroxyacetone phosphate. Its pathway is carbohydrate biosynthesis; gluconeogenesis. It functions in the pathway carbohydrate degradation; glycolysis; D-glyceraldehyde 3-phosphate from glycerone phosphate: step 1/1. This is Triosephosphate isomerase (Tpi) from Heliothis virescens (Tobacco budworm moth).